A 62-amino-acid chain; its full sequence is MGELAASANHGHSPCYPERKGTPGDLSKRKMLVHFYPRRHSHPRATQQWILKNKTLCRRIKE.

The segment at 1–26 (MGELAASANHGHSPCYPERKGTPGDL) is disordered. The segment covering 17-26 (PERKGTPGDL) has biased composition (basic and acidic residues).

This is an uncharacterized protein from Homo sapiens (Human).